Consider the following 213-residue polypeptide: MPKPIFISFEGPEGAGKTSVLEALISELKTKLGDDLVTTREPGGNPISEAIRSILQPEEDNGMDKRTEALLYTAARRQHLVENIKPALDQNKIVISDRYVDSSLAYQGGGRGLGIDNIWEINQFAIDGLLPDMTIYLDVPVEIGLARVNENRQGKIDRLDKESISFHQKVRETYLKLQSEFSDRIKIVDATQPLNKVIDDTRILINQILEDKS.

An ATP-binding site is contributed by 11-18 (GPEGAGKT).

It belongs to the thymidylate kinase family.

It catalyses the reaction dTMP + ATP = dTDP + ADP. Phosphorylation of dTMP to form dTDP in both de novo and salvage pathways of dTTP synthesis. The sequence is that of Thymidylate kinase from Leuconostoc mesenteroides subsp. mesenteroides (strain ATCC 8293 / DSM 20343 / BCRC 11652 / CCM 1803 / JCM 6124 / NCDO 523 / NBRC 100496 / NCIMB 8023 / NCTC 12954 / NRRL B-1118 / 37Y).